A 108-amino-acid chain; its full sequence is Small ribosomal subunit protein bS16 (108 aa).

The disordered stretch occupies residues 82–108; sequence ESKFSKNTQTENKKPVSKKTTKKSKDN. Basic residues predominate over residues 96 to 108; the sequence is PVSKKTTKKSKDN.

This sequence belongs to the bacterial ribosomal protein bS16 family.

The protein is Small ribosomal subunit protein bS16 of Mycoplasma mycoides subsp. mycoides SC (strain CCUG 32753 / NCTC 10114 / PG1).